We begin with the raw amino-acid sequence, 346 residues long: Aspartate-semialdehyde dehydrogenase (346 aa).

Residues 10–13 (TGQG) and 38–39 (RS) contribute to the NADP(+) site. Residue arginine 98 participates in phosphate binding. Cysteine 131 acts as the Acyl-thioester intermediate in catalysis. Glutamine 158 contacts substrate. 161–162 (SG) serves as a coordination point for NADP(+). Lysine 228 contacts phosphate. Position 250 (arginine 250) interacts with substrate. The active-site Proton acceptor is the histidine 257. Asparagine 326 is an NADP(+) binding site.

The protein belongs to the aspartate-semialdehyde dehydrogenase family. Homodimer.

It carries out the reaction L-aspartate 4-semialdehyde + phosphate + NADP(+) = 4-phospho-L-aspartate + NADPH + H(+). It participates in amino-acid biosynthesis; L-lysine biosynthesis via DAP pathway; (S)-tetrahydrodipicolinate from L-aspartate: step 2/4. It functions in the pathway amino-acid biosynthesis; L-methionine biosynthesis via de novo pathway; L-homoserine from L-aspartate: step 2/3. The protein operates within amino-acid biosynthesis; L-threonine biosynthesis; L-threonine from L-aspartate: step 2/5. Catalyzes the NADPH-dependent formation of L-aspartate-semialdehyde (L-ASA) by the reductive dephosphorylation of L-aspartyl-4-phosphate. The protein is Aspartate-semialdehyde dehydrogenase of Mycolicibacterium smegmatis (Mycobacterium smegmatis).